Here is an 826-residue protein sequence, read N- to C-terminus: Copper-transporting ATPase 1 (826 aa).

HMA domains are found at residues 15 to 80 (APTD…YEPK) and 82 to 147 (IIQE…YDVR). Residues C26, C29, C93, and C96 each coordinate Cu cation. The next 6 helical transmembrane spans lie at 172–192 (LVIL…GSHF), 209–229 (NLYI…LRFF), 246–266 (LVVL…FASG), 270–290 (SGTA…ILLG), 429–449 (AWFV…WYVF), and 457–477 (FALV…MGLA). Catalysis depends on D514, which acts as the 4-aspartylphosphate intermediate. Residues D713 and D717 each coordinate Mg(2+). 2 helical membrane passes run 772–792 (FWAF…LYPL) and 795–815 (TLLS…FVLG).

This sequence belongs to the cation transport ATPase (P-type) (TC 3.A.3) family. Type IB subfamily.

It localises to the cell membrane. It catalyses the reaction Cu(2+)(in) + ATP + H2O = Cu(2+)(out) + ADP + phosphate + H(+). Functionally, involved in copper transport. The chain is Copper-transporting ATPase 1 (actP1) from Rhizobium meliloti (strain 1021) (Ensifer meliloti).